We begin with the raw amino-acid sequence, 185 residues long: ATP-dependent protease subunit HslV (185 aa).

Thr-12 is a catalytic residue. 3 residues coordinate Na(+): Ala-168, Cys-171, and Thr-174.

This sequence belongs to the peptidase T1B family. HslV subfamily. As to quaternary structure, a double ring-shaped homohexamer of HslV is capped on each side by a ring-shaped HslU homohexamer. The assembly of the HslU/HslV complex is dependent on binding of ATP.

The protein localises to the cytoplasm. It carries out the reaction ATP-dependent cleavage of peptide bonds with broad specificity.. Its activity is regulated as follows. Allosterically activated by HslU binding. Protease subunit of a proteasome-like degradation complex believed to be a general protein degrading machinery. This Roseobacter denitrificans (strain ATCC 33942 / OCh 114) (Erythrobacter sp. (strain OCh 114)) protein is ATP-dependent protease subunit HslV.